Here is a 90-residue protein sequence, read N- to C-terminus: ESAT-6-like protein EsxE (90 aa).

The protein belongs to the WXG100 family. ESAT-6 subfamily.

Its subcellular location is the secreted. This chain is ESAT-6-like protein EsxE, found in Mycobacterium tuberculosis (strain CDC 1551 / Oshkosh).